The sequence spans 1013 residues: Alpha-2-macroglobulin homolog (1013 aa).

A disordered region spans residues 804–844 (AQRGANGERDGLRETVPVRPAGARQLLSGSGSVGADKAGGN).

Belongs to the protease inhibitor I39 (alpha-2-macroglobulin) family. Bacterial alpha-2-macroglobulin subfamily.

The chain is Alpha-2-macroglobulin homolog from Deinococcus radiodurans (strain ATCC 13939 / DSM 20539 / JCM 16871 / CCUG 27074 / LMG 4051 / NBRC 15346 / NCIMB 9279 / VKM B-1422 / R1).